The sequence spans 191 residues: Putative manganese efflux pump MntP (191 aa).

6 helical membrane-spanning segments follow: residues 3–23 (PISI…AAIG), 37–57 (LRAG…GWLL), 65–85 (VEAF…IHMI), 107–129 (WKLA…GLAF), 144–164 (CTLT…SMVG), and 169–189 (IIGG…HLHG).

Belongs to the MntP (TC 9.B.29) family.

Its subcellular location is the cell inner membrane. Functionally, probably functions as a manganese efflux pump. This is Putative manganese efflux pump MntP from Stenotrophomonas maltophilia (strain K279a).